Reading from the N-terminus, the 320-residue chain is tRNA uridine(34) hydroxylase (320 aa).

In terms of domain architecture, Rhodanese spans 125 to 221 (KEKRPLLLDV…YGLKQGSEHW (97 aa)). Residue Cys-181 is the Cysteine persulfide intermediate of the active site.

It belongs to the TrhO family.

It carries out the reaction uridine(34) in tRNA + AH2 + O2 = 5-hydroxyuridine(34) in tRNA + A + H2O. In terms of biological role, catalyzes oxygen-dependent 5-hydroxyuridine (ho5U) modification at position 34 in tRNAs. This Protochlamydia amoebophila (strain UWE25) protein is tRNA uridine(34) hydroxylase.